The sequence spans 544 residues: NXPE family member 4 (544 aa).

The first 27 residues, 1–27, serve as a signal peptide directing secretion; that stretch reads MKISMINYKSLLALLFILASWIIFTVF. Residues Asn-29, Asn-38, Asn-47, Asn-48, Asn-92, Asn-160, and Asn-210 are each glycosylated (N-linked (GlcNAc...) asparagine).

Belongs to the NXPE family.

The protein resides in the secreted. This Homo sapiens (Human) protein is NXPE family member 4 (NXPE4).